The sequence spans 405 residues: MADVNKVVLAYSGGLDTSVILKWLQDTYNCEVVTFTADLGQGEEVEPARAKAQAMGVKEIYIDDLREEFVRDFVFPMFRANTVYEGEYLLGTSIARPLIAKRLIEIANETGADAISHGATGKGNDQVRFELGAYALKPGVKVIAPWREWDLLSREKLMDYAEKHNIPIERHGKKKSPYSMDANLLHISYEGGVLEDTWTEHEEDMWRWTKSPEDAPNVATYLELTYRNGDIVALDGVEMTPATVLATLNRIGGENGIGRLDIVENRYVGMKSRGCYETPGGTIMLRAHRAIESITLDREVAHLKDELMAKYASLIYTGYWWSPERLMLQQMIDASQAHVNGVVRLKLYKGNVIVTGRKSDDSLFDANIATFEDDAGAYDQADAAGFIKLNALRMRIAANKGRKLF.

ATP is bound by residues 10–18 (AYSGGLDTS) and alanine 37. Positions 88 and 93 each coordinate L-citrulline. Glycine 118 contacts ATP. L-aspartate is bound by residues threonine 120, asparagine 124, and aspartate 125. An L-citrulline-binding site is contributed by asparagine 124. Arginine 128, serine 179, serine 188, glutamate 264, and tyrosine 276 together coordinate L-citrulline.

The protein belongs to the argininosuccinate synthase family. Type 1 subfamily. In terms of assembly, homotetramer.

It localises to the cytoplasm. The enzyme catalyses L-citrulline + L-aspartate + ATP = 2-(N(omega)-L-arginino)succinate + AMP + diphosphate + H(+). It participates in amino-acid biosynthesis; L-arginine biosynthesis; L-arginine from L-ornithine and carbamoyl phosphate: step 2/3. The sequence is that of Argininosuccinate synthase from Pseudomonas savastanoi pv. phaseolicola (strain 1448A / Race 6) (Pseudomonas syringae pv. phaseolicola (strain 1448A / Race 6)).